The chain runs to 109 residues: UPF0102 protein Suden_1901 (109 aa).

It belongs to the UPF0102 family.

The polypeptide is UPF0102 protein Suden_1901 (Sulfurimonas denitrificans (strain ATCC 33889 / DSM 1251) (Thiomicrospira denitrificans (strain ATCC 33889 / DSM 1251))).